A 929-amino-acid chain; its full sequence is Valine--tRNA ligase (929 aa).

The 'HIGH' region signature appears at 40 to 50; it reads PNVTGHLHMGH. A 'KMSKS' region motif is present at residues 522-526; sequence KMSKS. An ATP-binding site is contributed by lysine 525. Residues 855–926 are a coiled coil; the sequence is LAGLIDKEAE…LEQQHAEITD (72 aa).

This sequence belongs to the class-I aminoacyl-tRNA synthetase family. ValS type 1 subfamily. In terms of assembly, monomer.

It localises to the cytoplasm. It catalyses the reaction tRNA(Val) + L-valine + ATP = L-valyl-tRNA(Val) + AMP + diphosphate. Catalyzes the attachment of valine to tRNA(Val). As ValRS can inadvertently accommodate and process structurally similar amino acids such as threonine, to avoid such errors, it has a 'posttransfer' editing activity that hydrolyzes mischarged Thr-tRNA(Val) in a tRNA-dependent manner. The protein is Valine--tRNA ligase of Nitrosococcus oceani (strain ATCC 19707 / BCRC 17464 / JCM 30415 / NCIMB 11848 / C-107).